A 155-amino-acid chain; its full sequence is Protein FAM163B (155 aa).

The helical transmembrane segment at 6–26 threads the bilayer; sequence VVITGGILATVILLCIIAVLC.

It belongs to the FAM163 family.

The protein localises to the membrane. The protein is Protein FAM163B (fam163b) of Xenopus tropicalis (Western clawed frog).